A 392-amino-acid chain; its full sequence is Succinyl-diaminopimelate desuccinylase (392 aa).

Residue H75 participates in Zn(2+) binding. D77 is a catalytic residue. A Zn(2+)-binding site is contributed by D108. E147 (proton acceptor) is an active-site residue. 3 residues coordinate Zn(2+): E148, E176, and H365.

It belongs to the peptidase M20A family. DapE subfamily. Homodimer. Zn(2+) is required as a cofactor. It depends on Co(2+) as a cofactor.

It catalyses the reaction N-succinyl-(2S,6S)-2,6-diaminopimelate + H2O = (2S,6S)-2,6-diaminopimelate + succinate. The protein operates within amino-acid biosynthesis; L-lysine biosynthesis via DAP pathway; LL-2,6-diaminopimelate from (S)-tetrahydrodipicolinate (succinylase route): step 3/3. Functionally, catalyzes the hydrolysis of N-succinyl-L,L-diaminopimelic acid (SDAP), forming succinate and LL-2,6-diaminopimelate (DAP), an intermediate involved in the bacterial biosynthesis of lysine and meso-diaminopimelic acid, an essential component of bacterial cell walls. This chain is Succinyl-diaminopimelate desuccinylase, found in Rhodopseudomonas palustris (strain BisB18).